The sequence spans 490 residues: Vacuolar amino acid transporter 7 (490 aa).

Residues 1–6 (MEATSS) lie on the Cytoplasmic side of the membrane. The chain crosses the membrane as a helical span at residues 7–27 (ALSSTANLVKTIVGAGTLAIP). Residues 28–34 (YSFKSDG) lie on the Vacuolar side of the membrane. Residues 35–55 (VLVGVILTLLAAVTSGLGLFV) traverse the membrane as a helical segment. The Cytoplasmic portion of the chain corresponds to 56–84 (LSKCSKTLINPRNSSFFTLCMLTYPTLAP). Residues 85–105 (IFDLAMIVQCFGVGLSYLVLI) form a helical membrane-spanning segment. Topologically, residues 106–108 (GDL) are vacuolar. The chain crosses the membrane as a helical span at residues 109–129 (FPGLFGGERNYWIIASAVIII). Topologically, residues 130-143 (PLCLVKKLDQLKYS) are cytoplasmic. A helical membrane pass occupies residues 144–164 (SILGLFALAYISILVFSHFVF). At 165-190 (ELGKGELTNILRNDICWWKIHDFKGL) the chain is on the vacuolar side. Residues 191 to 211 (LSTFSIIIFAFTGSMNLFPMI) traverse the membrane as a helical segment. At 212–221 (NELKDNSMEN) the chain is on the cytoplasmic side. A helical membrane pass occupies residues 222–242 (ITFVINNSISLSTALFLIVGL). Over 243 to 264 (SGYLTFGNETLGNLMLNYDPNS) the chain is Vacuolar. Residues 265-285 (IWIVIGKFCLGSMLILSFPLL) form a helical membrane-spanning segment. Topologically, residues 286–397 (FHPLRIAVNN…FVKSRFYWIT (112 aa)) are cytoplasmic. Residues 355-374 (NGNFDNGSIESQENNNDERG) form a disordered region. The span at 357-368 (NFDNGSIESQEN) shows a compositional bias: polar residues. The chain crosses the membrane as a helical span at residues 398 to 418 (ALLLISMYTLALSVQSFALVL). Topologically, residues 419–428 (SFVGATGSTS) are vacuolar. The chain crosses the membrane as a helical span at residues 429-449 (ISFTLPGLLGYKLIGLDSLAI). Residues 450–463 (GKMIPPKDRFYKRC) are Cytoplasmic-facing. The helical transmembrane segment at 464 to 484 (SLLLVFYGLSVMFLSLYVTVF) threads the bilayer. At 485–490 (NRSDEA) the chain is on the vacuolar side.

This sequence belongs to the amino acid/polyamine transporter 2 family.

The protein resides in the vacuole membrane. Probable amino acid transporter of unknown specificity. This Saccharomyces cerevisiae (strain ATCC 204508 / S288c) (Baker's yeast) protein is Vacuolar amino acid transporter 7 (AVT7).